Reading from the N-terminus, the 439-residue chain is Xylose isomerase (439 aa).

Residues His101 and Asp104 contribute to the active site. Residues Glu232, Glu268, His271, Asp296, Asp307, Asp309, and Asp339 each contribute to the Mg(2+) site.

The protein belongs to the xylose isomerase family. In terms of assembly, homotetramer. Mg(2+) is required as a cofactor.

It localises to the cytoplasm. The catalysed reaction is alpha-D-xylose = alpha-D-xylulofuranose. The polypeptide is Xylose isomerase (Pseudoalteromonas atlantica (strain T6c / ATCC BAA-1087)).